The sequence spans 443 residues: Xaa-Pro dipeptidase (443 aa).

Mn(2+) contacts are provided by D246, D257, H339, E384, and E423.

It belongs to the peptidase M24B family. Bacterial-type prolidase subfamily. It depends on Mn(2+) as a cofactor.

The catalysed reaction is Xaa-L-Pro dipeptide + H2O = an L-alpha-amino acid + L-proline. Functionally, splits dipeptides with a prolyl residue in the C-terminal position. This is Xaa-Pro dipeptidase from Salmonella paratyphi B (strain ATCC BAA-1250 / SPB7).